The chain runs to 151 residues: UPF0208 membrane protein CKO_00500 (151 aa).

Transmembrane regions (helical) follow at residues 46-65 and 69-91; these read YAIR…QIAL and LGPA…WWLG.

The protein belongs to the UPF0208 family.

The protein resides in the cell inner membrane. In Citrobacter koseri (strain ATCC BAA-895 / CDC 4225-83 / SGSC4696), this protein is UPF0208 membrane protein CKO_00500.